The primary structure comprises 112 residues: Nitrogen regulatory protein GlnK1 (112 aa).

Threonine 29 is a binding site for ADP. Threonine 29 and valine 38 together coordinate ATP. 52–54 (IVD) is a binding site for 2-oxoglutarate. ADP is bound by residues valine 64, 88-90 (DGK), and 101-103 (RVR). Residues valine 64, 86–90 (PGDGK), and 101–103 (RVR) contribute to the ATP site.

It belongs to the P(II) protein family. Homotrimer. Interacts and forms a complex with Amt1.

It is found in the cytoplasm. Its activity is regulated as follows. Formation of the GlnK1/Amt1 complex is decreased in the presence of Mg-ATP or 2-oxoglutarate. The presence of both effectors abolishes the formation of the complex. In terms of biological role, involved in the regulation of nitrogen metabolism. Regulates the activity of its targets by protein-protein interaction in response to the nitrogen status of the cell. Regulates the activity of the ammonia channel Amt1 via direct interaction. The protein is Nitrogen regulatory protein GlnK1 of Methanocaldococcus jannaschii (strain ATCC 43067 / DSM 2661 / JAL-1 / JCM 10045 / NBRC 100440) (Methanococcus jannaschii).